We begin with the raw amino-acid sequence, 309 residues long: Dicarboxylate carrier UCP2 (309 aa).

Residues 1–16 (MVGFKATDVPPTATVK) are Mitochondrial intermembrane-facing. Solcar repeat units follow at residues 11–106 (PTAT…VKQF), 114–203 (AGIG…IKDT), and 212–297 (DDLP…LKRA). Residues 16 to 63 (KFLGAGTAACIADLITFPLDTAKVRLQIQGERQGPMQAAASAQYRGVL) form an important for interaction with long-chain fatty acids region. A helical membrane pass occupies residues 17–40 (FLGAGTAACIADLITFPLDTAKVR). The Mitochondrial matrix portion of the chain corresponds to 41–77 (LQIQGERQGPMQAAASAQYRGVLGTILTMVRTEGPRS). The helical transmembrane segment at 78-103 (LYSGLVAGLQRQMSFASVRIGLYDSV) threads the bilayer. Residues 104–119 (KQFYTKGSEHAGIGSR) lie on the Mitochondrial intermembrane side of the membrane. A helical membrane pass occupies residues 120–145 (LLAGSTTGALAVAVAQPTDVVKVRFQ). Topologically, residues 146–173 (AQARAGAGRRYQSTVEAYKTIAREEGFR) are mitochondrial matrix. A helical membrane pass occupies residues 174-199 (GLWKGTSPNVARNAIVNCAELVTYDL). The Mitochondrial intermembrane segment spans residues 200-217 (IKDTLLKAHLMTDDLPCH). A helical transmembrane segment spans residues 218-242 (FTSAFGAGFCTTVIASPVDVVKTRY). Over 243–268 (MNSALGQYSSAGHCALTMLQKEGPQA) the chain is Mitochondrial matrix. Residues 269-294 (FYKGFMPSFLRLGSWNVVMFVTYEQL) traverse the membrane as a helical segment. Positions 278–285 (LRLGSWNV) are important for interaction with long-chain fatty acids. Over 295 to 309 (KRALMAARASREAPF) the chain is Mitochondrial intermembrane.

It belongs to the mitochondrial carrier (TC 2.A.29) family. Homotetramer. Adopts an asymmetrical dimer of dimers functional form. Interacts with MICU1 (when methylated); leading to decrease the calcium sensitivity of MICU1.

It localises to the mitochondrion inner membrane. It carries out the reaction L-aspartate(out) + phosphate(in) + H(+)(in) = L-aspartate(in) + phosphate(out) + H(+)(out). The enzyme catalyses oxaloacetate(out) + phosphate(in) + H(+)(in) = oxaloacetate(in) + phosphate(out) + H(+)(out). The catalysed reaction is (S)-malate(out) + phosphate(in) + H(+)(in) = (S)-malate(in) + phosphate(out) + H(+)(out). It catalyses the reaction malonate(out) + phosphate(in) + H(+)(in) = malonate(in) + phosphate(out) + H(+)(out). It carries out the reaction sulfate(out) + phosphate(in) + H(+)(in) = sulfate(in) + phosphate(out) + H(+)(out). The enzyme catalyses (S)-malate(out) = (S)-malate(in). The catalysed reaction is L-aspartate(out) = L-aspartate(in). It catalyses the reaction phosphate(in) = phosphate(out). It carries out the reaction chloride(in) = chloride(out). The enzyme catalyses H(+)(in) = H(+)(out). The catalysed reaction is a long-chain fatty acid(out) = a long-chain fatty acid(in). Its function is as follows. Antiporter that exports dicarboxylate intermediates of the Krebs cycle in exchange for phosphate plus a proton across the inner membrane of mitochondria, a process driven by mitochondrial motive force with an overall impact on glycolysis, glutaminolysis and glutathione-dependent redox balance. Continuous export of oxaloacetate and related four-carbon dicarboxylates from mitochondrial matrix into the cytosol negatively regulates the oxidation of acetyl-CoA substrates via the Krebs cycle lowering the ATP/ADP ratio and reactive oxygen species (ROS) production. May mediate inducible proton entry into the mitochondrial matrix affecting ATP turnover as a protection mechanism against oxidative stress. The proton currents are most likely associated with fatty acid flipping across the inner membrane of mitochondria in a metabolic process regulated by free fatty acids and purine nucleotides. Regulates the use of glucose as a source of energy. Required for glucose-induced DRP1-dependent mitochondrial fission and neuron activation in the ventromedial nucleus of the hypothalamus (VMH). This mitochondrial adaptation mechanism modulates the VMH pool of glucose-excited neurons with an impact on systemic glucose homeostasis. Regulates ROS levels and metabolic reprogramming of macrophages during the resolution phase of inflammation. Attenuates ROS production in response to IL33 to preserve the integrity of the Krebs cycle required for persistent production of itaconate and subsequent GATA3-dependent differentiation of inflammation-resolving alternatively activated macrophages. Can unidirectionally transport anions including L-malate, L-aspartate, phosphate and chloride ions. Does not mediate adaptive thermogenesis. The sequence is that of Dicarboxylate carrier UCP2 (UCP2) from Bos taurus (Bovine).